The chain runs to 86 residues: Translation initiation factor IF-1 (86 aa).

The S1-like domain occupies 1-72; that stretch reads MPKDDVIKME…TKGRIVYRKK (72 aa).

The protein belongs to the IF-1 family. Component of the 30S ribosomal translation pre-initiation complex which assembles on the 30S ribosome in the order IF-2 and IF-3, IF-1 and N-formylmethionyl-tRNA(fMet); mRNA recruitment can occur at any time during PIC assembly.

The protein localises to the cytoplasm. Functionally, one of the essential components for the initiation of protein synthesis. Stabilizes the binding of IF-2 and IF-3 on the 30S subunit to which N-formylmethionyl-tRNA(fMet) subsequently binds. Helps modulate mRNA selection, yielding the 30S pre-initiation complex (PIC). Upon addition of the 50S ribosomal subunit IF-1, IF-2 and IF-3 are released leaving the mature 70S translation initiation complex. This Pseudothermotoga lettingae (strain ATCC BAA-301 / DSM 14385 / NBRC 107922 / TMO) (Thermotoga lettingae) protein is Translation initiation factor IF-1.